The sequence spans 160 residues: Crossover junction endodeoxyribonuclease RuvC (160 aa).

Catalysis depends on residues D9, E68, and D141. Residues D9, E68, and D141 each coordinate Mg(2+).

The protein belongs to the RuvC family. As to quaternary structure, homodimer which binds Holliday junction (HJ) DNA. The HJ becomes 2-fold symmetrical on binding to RuvC with unstacked arms; it has a different conformation from HJ DNA in complex with RuvA. In the full resolvosome a probable DNA-RuvA(4)-RuvB(12)-RuvC(2) complex forms which resolves the HJ. Mg(2+) serves as cofactor.

It is found in the cytoplasm. The catalysed reaction is Endonucleolytic cleavage at a junction such as a reciprocal single-stranded crossover between two homologous DNA duplexes (Holliday junction).. The RuvA-RuvB-RuvC complex processes Holliday junction (HJ) DNA during genetic recombination and DNA repair. Endonuclease that resolves HJ intermediates. Cleaves cruciform DNA by making single-stranded nicks across the HJ at symmetrical positions within the homologous arms, yielding a 5'-phosphate and a 3'-hydroxyl group; requires a central core of homology in the junction. The consensus cleavage sequence is 5'-(A/T)TT(C/G)-3'. Cleavage occurs on the 3'-side of the TT dinucleotide at the point of strand exchange. HJ branch migration catalyzed by RuvA-RuvB allows RuvC to scan DNA until it finds its consensus sequence, where it cleaves and resolves the cruciform DNA. The polypeptide is Crossover junction endodeoxyribonuclease RuvC (Campylobacter jejuni subsp. jejuni serotype O:23/36 (strain 81-176)).